The following is a 479-amino-acid chain: Ribulose bisphosphate carboxylase large chain 2 (479 aa).

Substrate-binding residues include Asn-116 and Thr-166. Lys-168 acts as the Proton acceptor in catalysis. A substrate-binding site is contributed by Lys-170. Mg(2+) is bound by residues Lys-194, Asp-196, and Glu-197. Residue Lys-194 is modified to N6-carboxylysine. The active-site Proton acceptor is the His-287. Substrate is bound by residues Arg-288, His-320, and Ser-372.

It belongs to the RuBisCO large chain family. Type I subfamily. Heterohexadecamer of 8 large chains and 8 small chains. Requires Mg(2+) as cofactor.

It catalyses the reaction 2 (2R)-3-phosphoglycerate + 2 H(+) = D-ribulose 1,5-bisphosphate + CO2 + H2O. The catalysed reaction is D-ribulose 1,5-bisphosphate + O2 = 2-phosphoglycolate + (2R)-3-phosphoglycerate + 2 H(+). Its function is as follows. RuBisCO catalyzes two reactions: the carboxylation of D-ribulose 1,5-bisphosphate, the primary event in carbon dioxide fixation, as well as the oxidative fragmentation of the pentose substrate. Both reactions occur simultaneously and in competition at the same active site. The polypeptide is Ribulose bisphosphate carboxylase large chain 2 (Bradyrhizobium sp. (strain ORS 278)).